A 514-amino-acid chain; its full sequence is 5'-AMP-activated protein kinase subunit gamma-3 (514 aa).

Disordered regions lie at residues methionine 1–alanine 121 and aspartate 134–asparagine 155. Positions serine 59 to serine 71 are enriched in polar residues. CBS domains are found at residues methionine 222 to leucine 283, cysteine 305 to leucine 363, and threonine 380 to methionine 440. Residues arginine 250, methionine 265 to aspartate 270, valine 310, histidine 331 to arginine 332, and lysine 350 each bind ADP. AMP-binding positions include arginine 250, methionine 265–aspartate 270, valine 310, histidine 331, histidine 331–arginine 332, lysine 350, threonine 380, alanine 385, serine 406–alanine 407, serine 422–aspartate 425, arginine 449, leucine 457, histidine 478, histidine 478–arginine 479, and serine 494–aspartate 497. Residues arginine 250, methionine 265–aspartate 270, valine 310, histidine 331–arginine 332, arginine 332, and lysine 350 contribute to the ATP site. Positions leucine 318–valine 339 match the AMPK pseudosubstrate motif. ADP is bound by residues serine 422 to aspartate 425, arginine 449, leucine 457, and histidine 478 to arginine 479. Residues serine 422–aspartate 425, arginine 449, leucine 457, and histidine 478–arginine 479 each bind ATP. The 60-residue stretch at cysteine 452–alanine 511 folds into the CBS 4 domain.

The protein belongs to the 5'-AMP-activated protein kinase gamma subunit family. AMPK is a heterotrimer of an alpha catalytic subunit (PRKAA1 or PRKAA2), a beta (PRKAB1 or PRKAB2) and a gamma non-catalytic subunits (PRKAG1, PRKAG2 or PRKAG3). Interacts with FNIP1 and FNIP2. Phosphorylated by ULK1; leading to negatively regulate AMPK activity and suggesting the existence of a regulatory feedback loop between ULK1 and AMPK. In terms of processing, glycosylated; O-GlcNAcylated by OGT, promoting the AMP-activated protein kinase (AMPK) activity. In terms of tissue distribution, muscle.

AMP/ATP-binding subunit of AMP-activated protein kinase (AMPK), an energy sensor protein kinase that plays a key role in regulating cellular energy metabolism. In response to reduction of intracellular ATP levels, AMPK activates energy-producing pathways and inhibits energy-consuming processes: inhibits protein, carbohydrate and lipid biosynthesis, as well as cell growth and proliferation. AMPK acts via direct phosphorylation of metabolic enzymes, and by longer-term effects via phosphorylation of transcription regulators. AMPK also acts as a regulator of cellular polarity by remodeling the actin cytoskeleton; probably by indirectly activating myosin. The AMPK gamma3 subunit is a non-catalytic subunit with a regulatory role in muscle energy metabolism. It mediates binding to AMP, ADP and ATP, leading to AMPK activation or inhibition: AMP-binding results in allosteric activation of alpha catalytic subunit (PRKAA1 or PRKAA2) both by inducing phosphorylation and preventing dephosphorylation of catalytic subunits. ADP also stimulates phosphorylation, without stimulating already phosphorylated catalytic subunit. ATP promotes dephosphorylation of catalytic subunit, rendering the AMPK enzyme inactive. The chain is 5'-AMP-activated protein kinase subunit gamma-3 (PRKAG3) from Sus scrofa (Pig).